Consider the following 447-residue polypeptide: Serine/threonine-protein phosphatase 2A 55 kDa regulatory subunit B alpha isoform (447 aa).

An N-acetylalanine modification is found at A2. WD repeat units follow at residues 11–80, 94–174, 175–218, 227–270, 288–325, 347–381, and 414–446; these read QWCF…FQSH, EKIN…IFAN, AHTY…VDIK, EVIT…KLFE, ISDVKFSHSGRYMMTRDYLSVKVWDLNMENRPVETYQV, ECCWNGSDSVVMTGSYNNFFRMFDRNTKRDITLEA, and DFNKKILHTAWHPKENIIAVATTNNLYIFQDKV.

The protein belongs to the phosphatase 2A regulatory subunit B family. PP2A consists of a common heterodimeric core enzyme, composed of a 36 kDa catalytic subunit (subunit C) and a 65 kDa constant regulatory subunit (PR65 or subunit A), that associates with a variety of regulatory subunits. Proteins that associate with the core dimer include three families of regulatory subunits B (the R2/B/PR55/B55, R3/B''/PR72/PR130/PR59 and R5/B'/B56 families), the 48 kDa variable regulatory subunit, viral proteins, and cell signaling molecules. Interacts with the PP2A C catalytic subunit PPP2CA. Interacts with the PP2A A subunit PPP2R1A. Found in a complex with at least ARL2, PPP2CB, PPP2R1A, PPP2R2A, PPP2R5E and TBCD. Interacts with MFHAS1; the interaction is direct. Interacts with PABIR1/FAM122A (via its N-terminus); the interaction is direct and inhibits PP2A activity. Interacts with ARPP19; the interaction is direct and inhibits PP2A activity. Interacts with CRTC3. Brain.

In terms of biological role, substrate-recognition subunit of protein phosphatase 2A (PP2A) that plays a key role in cell cycle by controlling mitosis entry and exit. Involved in chromosome clustering during late mitosis by mediating dephosphorylation of MKI67. Essential for serine/threonine-protein phosphatase 2A-mediated dephosphorylation of WEE1, preventing its ubiquitin-mediated proteolysis, increasing WEE1 protein levels, and promoting the G2/M checkpoint. In Rattus norvegicus (Rat), this protein is Serine/threonine-protein phosphatase 2A 55 kDa regulatory subunit B alpha isoform (Ppp2r2a).